Consider the following 304-residue polypeptide: Quinolinate synthase (304 aa).

Iminosuccinate contacts are provided by His-23 and Ser-40. Cys-85 serves as a coordination point for [4Fe-4S] cluster. Residues 111-113 and Ser-128 contribute to the iminosuccinate site; that span reads YIN. A [4Fe-4S] cluster-binding site is contributed by Cys-171. Residues 197-199 and Thr-214 contribute to the iminosuccinate site; that span reads HPE. Cys-259 lines the [4Fe-4S] cluster pocket.

This sequence belongs to the quinolinate synthase family. Type 2 subfamily. [4Fe-4S] cluster is required as a cofactor.

The protein resides in the cytoplasm. The enzyme catalyses iminosuccinate + dihydroxyacetone phosphate = quinolinate + phosphate + 2 H2O + H(+). It functions in the pathway cofactor biosynthesis; NAD(+) biosynthesis; quinolinate from iminoaspartate: step 1/1. Catalyzes the condensation of iminoaspartate with dihydroxyacetone phosphate to form quinolinate. The sequence is that of Quinolinate synthase from Clostridioides difficile (strain 630) (Peptoclostridium difficile).